A 1121-amino-acid chain; its full sequence is Phosphatidylinositol 4-kinase beta 1 (1121 aa).

The 143-residue stretch at 1–143 (MPMGRFLSLV…SRIQEKCQIA (143 aa)) folds into the PIK helical domain. Over residues 187-207 (PPTQKSLSFSPSPGTNVQDDG) the composition is skewed to polar residues. The tract at residues 187-210 (PPTQKSLSFSPSPGTNVQDDGSQL) is disordered. 9 consecutive repeat copies span residues 212–231 (AEDN…RDAL), 244–263 (SEKE…EGDE), 266–285 (PNSE…EDED), 288–306 (NSSE…ESEE), 309–328 (SSSD…DEEE), 331–350 (ANSD…EDEE), 353–372 (PNSE…EDDK), 380–398 (EDKD…DDKR), and 420–438 (DERE…DDKK). Positions 212–508 (AEDNKIFKKL…FRDRDQSVED (297 aa)) are 11 X 20 AA approximate repeats (PPC). Disordered regions lie at residues 343 to 421 (ESKN…EEDE), 435 to 489 (DDKK…ESSP), 506 to 544 (VEDS…NTAS), and 794 to 825 (AAAA…NGGM). Composition is skewed to basic and acidic residues over residues 358-376 (FFKK…VPKE), 383-405 (DGFL…EKNE), 412-421 (ADKKSGEEDE), and 435-445 (DDKKDIVKVDD). Acidic residues predominate over residues 446-455 (GNESEGDESP). 2 positions are modified to phosphoserine: Ser449 and Ser454. 2 consecutive repeat copies span residues 454–472 (SPEF…EDAK) and 489–508 (PGTE…SVED). Residues 466 to 475 (IHPEDAKPTS) show a composition bias toward basic and acidic residues. The span at 476 to 489 (ENENSSNGLVESSP) shows a compositional bias: polar residues. Residues 835-1106 (ELWEGKRDRI…LISSSLDAWR (272 aa)) enclose the PI3K/PI4K catalytic domain. A G-loop region spans residues 841-847 (RDRIRKA). The tract at residues 969–977 (QVKDRHNGN) is catalytic loop. Positions 988-1012 (HIDFGFMLSNSPGGVNFESAPFKLT) are activation loop.

Belongs to the PI3/PI4-kinase family. Type III PI4K subfamily. Interacts with AHK2, CBL1 and RABA4D. As to expression, expressed constitutively in leaves, roots, flowers, and stems.

The protein resides in the cell membrane. Its subcellular location is the golgi apparatus. The protein localises to the trans-Golgi network. It localises to the cytoplasmic vesicle membrane. It carries out the reaction a 1,2-diacyl-sn-glycero-3-phospho-(1D-myo-inositol) + ATP = a 1,2-diacyl-sn-glycero-3-phospho-(1D-myo-inositol 4-phosphate) + ADP + H(+). With respect to regulation, stimulated by phosphatidylinositol 4-phosphate (PtdIns4P). Slightly repressed by phosphatidyl-choline (PtdCho), wortmannin and adenosine. In terms of biological role, acts on phosphatidylinositol (PtdIns) in the first committed step in the production of the second messenger inositol-1,4,5-trisphosphate. Necessary for proper organization of the trans-Golgi network (TGN) and post-Golgi secretion in root hairs. Together with PI4KB2, required during polarized root hair expansion and pollen tube elongation. Functions redundantly with PI4KB2 upstream of the cold response phosphoinositide-dependent phospholipase C (PI-PLC) pathway. The polypeptide is Phosphatidylinositol 4-kinase beta 1 (Arabidopsis thaliana (Mouse-ear cress)).